Consider the following 301-residue polypeptide: Formylmethanofuran--tetrahydromethanopterin formyltransferase-like protein (301 aa).

It belongs to the FTR family.

In Archaeoglobus fulgidus (strain ATCC 49558 / DSM 4304 / JCM 9628 / NBRC 100126 / VC-16), this protein is Formylmethanofuran--tetrahydromethanopterin formyltransferase-like protein.